Reading from the N-terminus, the 320-residue chain is HPr kinase/phosphorylase (320 aa).

Residues His141 and Lys162 contribute to the active site. Residue 156 to 163 (GHSGLGKS) participates in ATP binding. Position 163 (Ser163) interacts with Mg(2+). Asp180 serves as the catalytic Proton acceptor; for phosphorylation activity. Proton donor; for dephosphorylation activity. The tract at residues 204-213 (LEVRGLGILN) is important for the catalytic mechanism of both phosphorylation and dephosphorylation. Glu205 is a binding site for Mg(2+). Arg248 is a catalytic residue. The segment at 269 to 274 (PVAVGR) is important for the catalytic mechanism of dephosphorylation.

Belongs to the HPrK/P family. As to quaternary structure, homohexamer. Requires Mg(2+) as cofactor.

It carries out the reaction [HPr protein]-L-serine + ATP = [HPr protein]-O-phospho-L-serine + ADP + H(+). The catalysed reaction is [HPr protein]-O-phospho-L-serine + phosphate + H(+) = [HPr protein]-L-serine + diphosphate. Its function is as follows. Catalyzes the ATP- as well as the pyrophosphate-dependent phosphorylation of a specific serine residue in HPr, a phosphocarrier protein of the phosphoenolpyruvate-dependent sugar phosphotransferase system (PTS). HprK/P also catalyzes the pyrophosphate-producing, inorganic phosphate-dependent dephosphorylation (phosphorolysis) of seryl-phosphorylated HPr (P-Ser-HPr). The polypeptide is HPr kinase/phosphorylase (Neisseria meningitidis serogroup A / serotype 4A (strain DSM 15465 / Z2491)).